Here is a 262-residue protein sequence, read N- to C-terminus: MASQWTIPKLVTWRVRDWASCFLACKIPLDGDEDGANNNGNTTNNNNLTFKRIKRKIKSTKKKRSERKLSLSPPGTRHHHLHLRSSSVSPTTSGSQHRRLSWPQPPVSEESGFIVFCFDREDGGFDVVKEGKQEKKETESSSEKSPRTVNRKLIYGDQGVGGTEKNNSPETKGTEQDQNDNTSCQGTKDVSSDVTERTKEEEDIDASDKSSGSSHSDEGRGSFAFPILGVEWMGSPAKMPESDDLSPKKQKPVALGFQCCRF.

Disordered stretches follow at residues 32 to 107 (DEDG…QPPV) and 129 to 222 (KEGK…GRGS). Residues 37 to 47 (NNNGNTTNNNN) are compositionally biased toward low complexity. 2 consecutive short sequence motifs (nuclear localization signal) follow at residues 50-57 (FKRIKRKI) and 61-68 (KKKRSERK). Positions 51-66 (KRIKRKIKSTKKKRSE) are enriched in basic residues. Phosphoserine; by ASK7 is present on residues Ser72, Ser85, Ser86, and Ser87. Low complexity predominate over residues 84–95 (RSSSVSPTTSGS). Ser89 carries the post-translational modification Phosphoserine; by ASK7 and MPK6. Thr91 carries the post-translational modification Phosphothreonine; by ASK7. Residues 129–146 (KEGKQEKKETESSSEKSP) are compositionally biased toward basic and acidic residues. A phosphoserine; by MPK6 mark is found at Ser145 and Ser168. The span at 179–189 (NDNTSCQGTKD) shows a compositional bias: polar residues. The segment covering 190 to 200 (VSSDVTERTKE) has biased composition (basic and acidic residues). Residues 222–262 (SFAFPILGVEWMGSPAKMPESDDLSPKKQKPVALGFQCCRF) form a required for polarization at the cell cortex region. The FxFP, required for cortical polarity formation signature appears at 223-226 (FAFP). A phosphoserine; by MPK6 mark is found at Ser235 and Ser246.

Component of a complex made of POLAR, BASL, ASK7/BIN2 and ASK3/SK12. Interacts with POLAR, ASK7/BIN2 and ASK3/SK12. Binds to YDA when phosphorylated. Interacts with MPK6, MPK3 and MKK5. Cortical localization of BASL requires phosphorylation mediated by MPK3 and MPK6. Phosphorylation promotes YDA binding. Phosphorylation status modulates subcellular mobility. Mostly expressed in stomatal lineage cells including asymmetrically dividing meristemoid mother cells (MMCs) and meristemoids, and, at lower levels, in their sisters. Also present in vasculature. Expressed at low levels in the epidermal pavement cells.

The protein resides in the cytoplasm. Its subcellular location is the nucleus. It localises to the cell cortex. It is found in the cell membrane. Regulates asymmetric cell division (ACD), especially in stomatal-lineage cells, probably by modulating accumulation and subcellular polarization of POLAR and SPCH. Mediates an attenuation of MAPK signaling upon polarization of POLAR and ASK7/BIN2 in stomatal lineage ground cells (SLGCs) undergoing ACD, and relieves BIN2 inhibition of SPCH in the nucleus. When phosphorylated, functions as a scaffold and recruits the MAPKKK YODA, MPK3 and MPK6 to spatially reorganize the MAPK signaling pathway at the cortex of cells undergoing ACD. Cortical polarization leads to elevated nuclear MPK6 signaling and lowered SPCH abundance in one of the two daughter cells, thus differentiating the two daughter cells after ACD. In Arabidopsis thaliana (Mouse-ear cress), this protein is Protein BREAKING OF ASYMMETRY IN THE STOMATAL LINEAGE.